A 211-amino-acid polypeptide reads, in one-letter code: Imidazole glycerol phosphate synthase subunit HisH (211 aa).

The 209-residue stretch at 3–211 (VIAVIDYDMG…VNQIRVKAIA (209 aa)) folds into the Glutamine amidotransferase type-1 domain. Catalysis depends on Cys-81, which acts as the Nucleophile. Catalysis depends on residues His-186 and Glu-188.

In terms of assembly, heterodimer of HisH and HisF.

Its subcellular location is the cytoplasm. The catalysed reaction is 5-[(5-phospho-1-deoxy-D-ribulos-1-ylimino)methylamino]-1-(5-phospho-beta-D-ribosyl)imidazole-4-carboxamide + L-glutamine = D-erythro-1-(imidazol-4-yl)glycerol 3-phosphate + 5-amino-1-(5-phospho-beta-D-ribosyl)imidazole-4-carboxamide + L-glutamate + H(+). It catalyses the reaction L-glutamine + H2O = L-glutamate + NH4(+). Its pathway is amino-acid biosynthesis; L-histidine biosynthesis; L-histidine from 5-phospho-alpha-D-ribose 1-diphosphate: step 5/9. Its function is as follows. IGPS catalyzes the conversion of PRFAR and glutamine to IGP, AICAR and glutamate. The HisH subunit catalyzes the hydrolysis of glutamine to glutamate and ammonia as part of the synthesis of IGP and AICAR. The resulting ammonia molecule is channeled to the active site of HisF. In Gloeothece citriformis (strain PCC 7424) (Cyanothece sp. (strain PCC 7424)), this protein is Imidazole glycerol phosphate synthase subunit HisH.